The sequence spans 433 residues: G2/mitotic-specific cyclin-B1 (433 aa).

The tract at residues 19–47 (INMAGAKRVPTAPAATSKPGLRPRTALGD) is disordered. Lys-73 bears the N6-acetyllysine mark. Residues 93-116 (PVSEPVPEPEPEPEPEPVKEEKLS) are disordered. Ser-126 is modified (phosphoserine; by CDK1). Ser-128 carries the post-translational modification Phosphoserine. Ser-133 carries the post-translational modification Phosphoserine; by PLK1. Phosphoserine is present on Ser-147. Interaction with CDK2 regions lie at residues 169–177 (EYVKDIYAY) and 258–261 (YEEM). At Thr-321 the chain carries Phosphothreonine.

Belongs to the cyclin family. Cyclin AB subfamily. Interacts with the CDC2 protein kinase to form a serine/threonine kinase holoenzyme complex also known as maturation promoting factor (MPF). The cyclin subunit imparts substrate specificity to the complex. Binds HEI10. Interacts with catalytically active RALBP1 and CDC2 during mitosis to form an endocytotic complex during interphase. Interacts with CCNF; interaction is required for nuclear localization. Interacts with CDK5RAP3. Interacts with RFPL4A and UBE2A. Interacts with INCA1. Post-translationally, ubiquitinated by the SCF(NIPA) complex during interphase, leading to its destruction. Deubiquitinated by USP22 during G2/M phase. Phosphorylated by PLK1 at Ser-133 on centrosomes during prophase: phosphorylation by PLK1 does not cause nuclear import. Phosphorylation at Ser-147 was also reported to be mediated by PLK1 but Ser-133 seems to be the primary phosphorylation site.

Its subcellular location is the cytoplasm. The protein localises to the nucleus. The protein resides in the cytoskeleton. It is found in the microtubule organizing center. It localises to the centrosome. Functionally, essential for the control of the cell cycle at the G2/M (mitosis) transition. The sequence is that of G2/mitotic-specific cyclin-B1 (CCNB1) from Homo sapiens (Human).